The chain runs to 226 residues: 7-cyano-7-deazaguanine synthase (226 aa).

8–18 contributes to the ATP binding site; sequence LSGGLDSTTVL. Zn(2+) is bound by residues C190, C198, C201, and C204.

This sequence belongs to the QueC family. In terms of assembly, homodimer. Requires Zn(2+) as cofactor.

The catalysed reaction is 7-carboxy-7-deazaguanine + NH4(+) + ATP = 7-cyano-7-deazaguanine + ADP + phosphate + H2O + H(+). Its pathway is purine metabolism; 7-cyano-7-deazaguanine biosynthesis. Functionally, catalyzes the ATP-dependent conversion of 7-carboxy-7-deazaguanine (CDG) to 7-cyano-7-deazaguanine (preQ(0)). The sequence is that of 7-cyano-7-deazaguanine synthase from Clostridium kluyveri (strain ATCC 8527 / DSM 555 / NBRC 12016 / NCIMB 10680 / K1).